The sequence spans 65 residues: Toxin AaHIT4 (65 aa).

The 64-residue stretch at 1–64 (EHGYLLNKYT…LWNYKTNKCD (64 aa)) folds into the LCN-type CS-alpha/beta domain. 4 disulfides stabilise this stretch: cysteine 12-cysteine 63, cysteine 16-cysteine 38, cysteine 23-cysteine 45, and cysteine 27-cysteine 47.

This sequence belongs to the long (4 C-C) scorpion toxin superfamily. Sodium channel inhibitor family. Expressed by the venom gland.

The protein resides in the secreted. Its function is as follows. Has a toxic effect on insects and mammals and is capable of competing with anti-insect scorpion toxins for binding to the sodium channel (Nav) of insects. It also modulates the binding of alpha-type and beta-type anti-mammal scorpion toxins to the mammal sodium channel. It may act on both site 3 and site 4 of voltage-gated sodium channels. The chain is Toxin AaHIT4 from Androctonus australis (Sahara scorpion).